Here is a 283-residue protein sequence, read N- to C-terminus: Shikimate kinase (283 aa).

Residue 86 to 96 (PIKSGLSSSSA) participates in ATP binding.

It belongs to the GHMP kinase family. Archaeal shikimate kinase subfamily.

It is found in the cytoplasm. The catalysed reaction is shikimate + ATP = 3-phosphoshikimate + ADP + H(+). The protein operates within metabolic intermediate biosynthesis; chorismate biosynthesis; chorismate from D-erythrose 4-phosphate and phosphoenolpyruvate: step 5/7. This is Shikimate kinase from Methanococcus maripaludis (strain C5 / ATCC BAA-1333).